A 146-amino-acid chain; its full sequence is MRSFAIFLLVAIGIFIIDQNIKTLFLEGYYRGGSCIDLSLHFNKGVAFSMFAFIGPYLKWVQALLIGGILYYVLSKGYLKRYAFPAGLLIGGALGNLYDRFVHAGVVDYVAWHCGFNFAVFNFADVAIDLAVAWILIMVYFFPPKA.

The next 3 helical transmembrane spans lie at 6-26, 50-70, and 82-104; these read IFLLVAIGIFIIDQNIKTLFL, MFAFIGPYLKWVQALLIGGIL, and YAFPAGLLIGGALGNLYDRFVHA. Active-site residues include Asp108 and Asp125. A helical transmembrane segment spans residues 123-143; that stretch reads FADVAIDLAVAWILIMVYFFP.

It belongs to the peptidase A8 family.

It is found in the cell inner membrane. It catalyses the reaction Release of signal peptides from bacterial membrane prolipoproteins. Hydrolyzes -Xaa-Yaa-Zaa-|-(S,diacylglyceryl)Cys-, in which Xaa is hydrophobic (preferably Leu), and Yaa (Ala or Ser) and Zaa (Gly or Ala) have small, neutral side chains.. It functions in the pathway protein modification; lipoprotein biosynthesis (signal peptide cleavage). This protein specifically catalyzes the removal of signal peptides from prolipoproteins. The polypeptide is Lipoprotein signal peptidase (Sulfurovum sp. (strain NBC37-1)).